The chain runs to 276 residues: Dermonecrotic toxin LarSicTox-alphaIB2c (276 aa).

The active site involves histidine 5. Mg(2+) contacts are provided by glutamate 25 and aspartate 27. The Nucleophile role is filled by histidine 41. Intrachain disulfides connect cysteine 45-cysteine 51 and cysteine 47-cysteine 190. Position 85 (aspartate 85) interacts with Mg(2+). N-linked (GlcNAc...) asparagine glycosylation occurs at asparagine 253.

It belongs to the arthropod phospholipase D family. Class II subfamily. The cofactor is Mg(2+). Expressed by the venom gland.

The protein resides in the secreted. It carries out the reaction an N-(acyl)-sphingosylphosphocholine = an N-(acyl)-sphingosyl-1,3-cyclic phosphate + choline. The enzyme catalyses an N-(acyl)-sphingosylphosphoethanolamine = an N-(acyl)-sphingosyl-1,3-cyclic phosphate + ethanolamine. The catalysed reaction is a 1-acyl-sn-glycero-3-phosphocholine = a 1-acyl-sn-glycero-2,3-cyclic phosphate + choline. It catalyses the reaction a 1-acyl-sn-glycero-3-phosphoethanolamine = a 1-acyl-sn-glycero-2,3-cyclic phosphate + ethanolamine. Functionally, dermonecrotic toxins cleave the phosphodiester linkage between the phosphate and headgroup of certain phospholipids (sphingolipid and lysolipid substrates), forming an alcohol (often choline) and a cyclic phosphate. This toxin acts on sphingomyelin (SM). It may also act on ceramide phosphoethanolamine (CPE), lysophosphatidylcholine (LPC) and lysophosphatidylethanolamine (LPE), but not on lysophosphatidylserine (LPS), and lysophosphatidylglycerol (LPG). It acts by transphosphatidylation, releasing exclusively cyclic phosphate products as second products. Induces dermonecrosis, hemolysis, increased vascular permeability, edema, inflammatory response, and platelet aggregation. This chain is Dermonecrotic toxin LarSicTox-alphaIB2c, found in Loxosceles arizonica (Arizona brown spider).